The following is a 341-amino-acid chain: MEQMEVDVDMSAKPSTSSSAAAGSSMAVDKTADQNPQPQGNIMAAAGTSGSVTISLHPLVIMNISEHWTRFRAQHGEPRQVYGALIGKQKGRNIEIMNSFELKTDVIGDETVINKDYYNKKEQQYKQVFSDLDFIGWYTTGDNPTADDIKIQRQIAAINECPIMLQLNPLSRSVDHLPLKLFESLIDLVDGEATMLFVPLTYTLATEEAERIGVDHVARMTSNESGEKSVVAEHLVAQDSAIKMLNTRIKIVLQYIRDVEAGKLRANQEILREAYALCHRLPVMQVPAFQEEFYTQCNDVGLISYLGTLTKGCNDMHHFVNKFNMLYDRQGSARRMRGLYY.

Residues 1–43 (MEQMEVDVDMSAKPSTSSSAAAGSSMAVDKTADQNPQPQGNIM) form a disordered region. Residues 11–27 (SAKPSTSSSAAAGSSMA) are compositionally biased toward low complexity. The MPN domain maps to 54-188 (ISLHPLVIMN…LKLFESLIDL (135 aa)).

It belongs to the peptidase M67A family. CSN6 subfamily. Component of the CSN complex, probably composed of CSN1b, alien/CSN2, CSN3, CSN4, CSN5, CSN6, CSN7 and CSN8.

It localises to the cytoplasm. It is found in the nucleus. Its function is as follows. Component of the COP9 signalosome complex (CSN), a complex involved in various cellular and developmental processes. The CSN complex is an essential regulator of the ubiquitin (Ubl) conjugation pathway by mediating the deneddylation of the cullin subunits of the SCF-type E3 ligase complexes, leading to decrease the Ubl ligase activity of SCF. The CSN complex plays an essential role in oogenesis and embryogenesis and is required for proper photoreceptor R cell differentiation and promote lamina glial cell migration or axon targeting. It also promotes Ubl-dependent degradation of cyclin E (CycE) during early oogenesis. The sequence is that of COP9 signalosome complex subunit 6 (CSN6) from Drosophila melanogaster (Fruit fly).